Here is a 307-residue protein sequence, read N- to C-terminus: Coproporphyrin III ferrochelatase (307 aa).

Fe-coproporphyrin III contacts are provided by residues Tyr12, Arg29, 45-46 (RY), Ser53, and Tyr124. Residues His181 and Glu263 each contribute to the Fe(2+) site.

This sequence belongs to the ferrochelatase family.

It localises to the cytoplasm. It carries out the reaction Fe-coproporphyrin III + 2 H(+) = coproporphyrin III + Fe(2+). Its pathway is porphyrin-containing compound metabolism; protoheme biosynthesis. Functionally, involved in coproporphyrin-dependent heme b biosynthesis. Catalyzes the insertion of ferrous iron into coproporphyrin III to form Fe-coproporphyrin III. It can also insert iron into protoporphyrin IX, but it has a much stronger preference for coproprophyrin III as the substrate. In Staphylococcus aureus (strain NCTC 8325 / PS 47), this protein is Coproporphyrin III ferrochelatase.